The chain runs to 337 residues: Transcription factor HBI1 (337 aa).

Positions 119 to 180 (VALKNKRKPE…SKGASENQKL (62 aa)) are disordered. The span at 126–151 (KPEVKTREEQKTEKKIKVEAETESSM) shows a compositional bias: basic and acidic residues. Over residues 152–165 (KGKSNMGNTEASSD) the composition is skewed to polar residues. The region spanning 191 to 241 (QATDRHSLAERARREKISKKMKYLQDIVPGCNKVTGKAGMLDEIINYVQCL) is the bHLH domain.

Homodimer. Interacts with IBH1. In terms of tissue distribution, highly expressed in hypocotyls and cotyledons. Expressed in leaves, stems, and flowers.

It is found in the nucleus. Atypical bHLH transcription factor that acts as a positive regulator of cell elongation downstream of multiple external and endogenous signals by direct binding to the promoters and activation of the two expansin genes EXPA1 and EXPA8, encoding cell wall loosening enzymes. Transcriptional activity is inhibited when binding to the bHLH transcription factor IBH1. The polypeptide is Transcription factor HBI1 (HBI1) (Arabidopsis thaliana (Mouse-ear cress)).